Consider the following 499-residue polypeptide: Glycerol kinase (499 aa).

Residue threonine 13 coordinates ADP. Residues threonine 13, threonine 14, and serine 15 each coordinate ATP. Residue threonine 13 participates in sn-glycerol 3-phosphate binding. Residue arginine 17 coordinates ADP. Residues arginine 83, glutamate 84, tyrosine 135, and aspartate 245 each contribute to the sn-glycerol 3-phosphate site. Glycerol-binding residues include arginine 83, glutamate 84, tyrosine 135, aspartate 245, and glutamine 246. Residues threonine 267 and glycine 310 each coordinate ADP. ATP-binding residues include threonine 267, glycine 310, glutamine 314, and glycine 411. The ADP site is built by glycine 411 and asparagine 415.

The protein belongs to the FGGY kinase family.

The catalysed reaction is glycerol + ATP = sn-glycerol 3-phosphate + ADP + H(+). The protein operates within polyol metabolism; glycerol degradation via glycerol kinase pathway; sn-glycerol 3-phosphate from glycerol: step 1/1. Its activity is regulated as follows. Inhibited by fructose 1,6-bisphosphate (FBP). Its function is as follows. Key enzyme in the regulation of glycerol uptake and metabolism. Catalyzes the phosphorylation of glycerol to yield sn-glycerol 3-phosphate. The sequence is that of Glycerol kinase from Xanthomonas axonopodis pv. citri (strain 306).